A 124-amino-acid chain; its full sequence is ATP synthase epsilon chain (124 aa).

Residues 99–118 (LEQAKTEGDAHAERRADVRL) show a composition bias toward basic and acidic residues. Residues 99 to 124 (LEQAKTEGDAHAERRADVRLRAAAGR) are disordered.

This sequence belongs to the ATPase epsilon chain family. F-type ATPases have 2 components, CF(1) - the catalytic core - and CF(0) - the membrane proton channel. CF(1) has five subunits: alpha(3), beta(3), gamma(1), delta(1), epsilon(1). CF(0) has three main subunits: a, b and c.

It is found in the cell membrane. In terms of biological role, produces ATP from ADP in the presence of a proton gradient across the membrane. The protein is ATP synthase epsilon chain (atpC) of Streptomyces coelicolor (strain ATCC BAA-471 / A3(2) / M145).